The following is a 145-amino-acid chain: Procyclic form-specific polypeptide B-alpha (145 aa).

The first 27 residues, 1–27 (MAPRSLYLLAVLLFSANLFAGVGFAAA), serve as a signal peptide directing secretion. A disordered region spans residues 28–127 (AEGPEDKGLT…PEPEPGAATL (100 aa)). Positions 31–52 (PEDKGLTKGGKGKGEKGTKVGA) are enriched in basic and acidic residues. Tandem repeats lie at residues 59–60 (DP), 61–62 (DP), 63–64 (EP), 65–66 (EP), 67–68 (EP), 69–70 (EP), 71–72 (EP), 73–74 (EP), 75–76 (EP), 77–78 (EP), 79–80 (EP), 81–82 (EP), 83–84 (EP), 85–86 (EP), 87–88 (EP), 89–90 (EP), 91–92 (EP), 93–94 (EP), 95–96 (EP), 97–98 (EP), 99–100 (EP), 101–102 (EP), 103–104 (EP), 105–106 (EP), 107–108 (EP), 109–110 (EP), 111–112 (EP), 113–114 (EP), 115–116 (EP), 117–118 (EP), 119–120 (EP), and 121–122 (EP). Residues 59–122 (DPDPEPEPEP…EPEPEPEPEP (64 aa)) are 32 X 2 AA tandem repeats of [DE]-P. Over residues 60-120 (PDPEPEPEPE…EPEPEPEPEP (61 aa)) the composition is skewed to acidic residues. A lipid anchor (GPI-anchor amidated glycine) is attached at G123. A propeptide spanning residues 124–145 (AATLKSVALPFAIAAAALVAAF) is cleaved from the precursor.

The protein localises to the cell membrane. Its function is as follows. Major surface antigen of procyclic forms. The chain is Procyclic form-specific polypeptide B-alpha (PARPB) from Trypanosoma brucei brucei.